The chain runs to 85 residues: MFCVIYRSVKRDQTYLYVEKKDDFSRVPEELMKSFGAPQLAMVLPLNGRKKLANADIEKVKLALQEQGFYLQVPPPVESLLTTPV.

Residues 1–85 (MFCVIYRSVK…PVESLLTTPV (85 aa)) enclose the YcgL domain.

The polypeptide is YcgL domain-containing protein ECA2367 (Pectobacterium atrosepticum (strain SCRI 1043 / ATCC BAA-672) (Erwinia carotovora subsp. atroseptica)).